Consider the following 158-residue polypeptide: 6,7-dimethyl-8-ribityllumazine synthase 2 (158 aa).

5-amino-6-(D-ribitylamino)uracil is bound by residues Trp20, 54 to 56 (AYE), and 78 to 80 (FVI). Arg86 acts as the Proton donor in catalysis. Ser111 contacts 5-amino-6-(D-ribitylamino)uracil. His125 serves as a coordination point for (2S)-2-hydroxy-3-oxobutyl phosphate.

It belongs to the DMRL synthase family. In terms of assembly, homodecamer, arranged as a dimer of pentamers.

It is found in the cytoplasm. It carries out the reaction (2S)-2-hydroxy-3-oxobutyl phosphate + 5-amino-6-(D-ribitylamino)uracil = 6,7-dimethyl-8-(1-D-ribityl)lumazine + phosphate + 2 H2O + H(+). It participates in cofactor biosynthesis; riboflavin biosynthesis; riboflavin from 2-hydroxy-3-oxobutyl phosphate and 5-amino-6-(D-ribitylamino)uracil: step 1/2. Functionally, catalyzes the formation of 6,7-dimethyl-8-ribityllumazine by condensation of 5-amino-6-(D-ribitylamino)uracil with 3,4-dihydroxy-2-butanone 4-phosphate. This is the penultimate step in the biosynthesis of riboflavin. The isozyme RibH2 but not RibH1 is essential for Brucella intracellular survival and replication inside macrophages or in mice. Displays low catalytic activity in comparison with the isozyme RibH1. Is a highly immunogenic protein. Activates dendritic cells (DCs) in vitro, increasing the levels of costimulatory molecules and the secretion of pro-inflammatory cytokines, and recruits DCs, B cells and CD8+ T cells in vivo, both effects in a TLR4-dependent manner. Induces the cross presentation of covalently attached peptides and generates a strong and long-lasting humoral immune response without adjuvants; TLR4 signaling is necessary for the induction of the cytotoxic response but not for antigen cross presentation. Elicits a TLR4-mediated protective response against B16 melanoma in mice, slowing tumor growth and prolonging mice survival. This is 6,7-dimethyl-8-ribityllumazine synthase 2 from Brucella abortus (strain 2308).